Consider the following 423-residue polypeptide: Serine hydroxymethyltransferase (423 aa).

(6S)-5,6,7,8-tetrahydrofolate-binding positions include L120 and 124-126 (GHL). K229 bears the N6-(pyridoxal phosphate)lysine mark. (6S)-5,6,7,8-tetrahydrofolate contacts are provided by residues E245 and 353 to 355 (SPF).

It belongs to the SHMT family. In terms of assembly, homodimer. It depends on pyridoxal 5'-phosphate as a cofactor.

It localises to the cytoplasm. It catalyses the reaction (6R)-5,10-methylene-5,6,7,8-tetrahydrofolate + glycine + H2O = (6S)-5,6,7,8-tetrahydrofolate + L-serine. It functions in the pathway one-carbon metabolism; tetrahydrofolate interconversion. The protein operates within amino-acid biosynthesis; glycine biosynthesis; glycine from L-serine: step 1/1. Catalyzes the reversible interconversion of serine and glycine with tetrahydrofolate (THF) serving as the one-carbon carrier. This reaction serves as the major source of one-carbon groups required for the biosynthesis of purines, thymidylate, methionine, and other important biomolecules. Also exhibits THF-independent aldolase activity toward beta-hydroxyamino acids, producing glycine and aldehydes, via a retro-aldol mechanism. This chain is Serine hydroxymethyltransferase, found in Prochlorococcus marinus (strain MIT 9312).